The sequence spans 347 residues: Protein RecA (347 aa).

64 to 71 contacts ATP; it reads GPESSGKT.

It belongs to the RecA family.

It localises to the cytoplasm. In terms of biological role, can catalyze the hydrolysis of ATP in the presence of single-stranded DNA, the ATP-dependent uptake of single-stranded DNA by duplex DNA, and the ATP-dependent hybridization of homologous single-stranded DNAs. It interacts with LexA causing its activation and leading to its autocatalytic cleavage. This chain is Protein RecA, found in Bartonella bacilliformis (strain ATCC 35685 / KC583 / Herrer 020/F12,63).